Here is a 218-residue protein sequence, read N- to C-terminus: 3,4-dihydroxy-2-butanone 4-phosphate synthase (218 aa).

Residues 38 to 39, Asp-43, 151 to 155, and Glu-175 contribute to the D-ribulose 5-phosphate site; these read RE and RRGHT. Mg(2+) is bound at residue Glu-39. His-154 serves as a coordination point for Mg(2+).

Belongs to the DHBP synthase family. In terms of assembly, homodimer. Mg(2+) is required as a cofactor. The cofactor is Mn(2+).

It catalyses the reaction D-ribulose 5-phosphate = (2S)-2-hydroxy-3-oxobutyl phosphate + formate + H(+). The protein operates within cofactor biosynthesis; riboflavin biosynthesis; 2-hydroxy-3-oxobutyl phosphate from D-ribulose 5-phosphate: step 1/1. Catalyzes the conversion of D-ribulose 5-phosphate to formate and 3,4-dihydroxy-2-butanone 4-phosphate. This Shewanella frigidimarina (strain NCIMB 400) protein is 3,4-dihydroxy-2-butanone 4-phosphate synthase.